The primary structure comprises 259 residues: TCF3 fusion partner homolog (259 aa).

Disordered regions lie at residues 50–72 and 141–210; these read GGLG…GRRR and EDDG…APVQ. The residue at position 167 (S167) is a Phosphoserine. Over residues 167 to 178 the composition is skewed to polar residues; it reads SPSQRTTATLDP. T172 is subject to Phosphothreonine. A phosphoserine mark is found at S180 and S188. Position 203 is a phosphothreonine (T203). K222 is covalently cross-linked (Glycyl lysine isopeptide (Lys-Gly) (interchain with G-Cter in SUMO2)). S255 carries the post-translational modification Phosphoserine.

In terms of assembly, interacts with NOL3; translocates NOL3 into the nucleus and negatively regulated TFPT-induced cell death. Component of the chromatin remodeling INO80 complex; specifically part of a complex module associated with the N-terminus of INO80.

The protein resides in the nucleus. In terms of biological role, appears to promote apoptosis in a p53/TP53-independent manner. Its function is as follows. Putative regulatory component of the chromatin remodeling INO80 complex which is involved in transcriptional regulation, DNA replication and probably DNA repair. In Mus musculus (Mouse), this protein is TCF3 fusion partner homolog (Tfpt).